We begin with the raw amino-acid sequence, 450 residues long: Bestrophin homolog 1 (450 aa).

Residues 1–31 (MTINYHKEIMTSHPWTFFLLLFKWKGSIWKA) are Cytoplasmic-facing. A helical transmembrane segment spans residues 32–51 (VYMETIIFLICYGIISVIYK). Topologically, residues 52–60 (TAMGESSQR) are extracellular. A helical membrane pass occupies residues 61–82 (TFESLVRYFDKRLSYIPLEFVL). The Cytoplasmic segment spans residues 83–242 (GFFVTTVVNR…DWVPLPLMYP (160 aa)). Residues 243-260 (QLVCLAVNLYFLVSIIAR) traverse the membrane as a helical segment. Residues 261-278 (QLVIEKHKMVDEVDVYFP) lie on the Extracellular side of the membrane. The chain crosses the membrane as a helical span at residues 279 to 292 (VMTFLQFIFYMGWL). The Cytoplasmic segment spans residues 293 to 450 (KVIDVMLNPF…WKIPTNPQKF (158 aa)). Ca(2+) contacts are provided by Asn-300, Asp-305, and Asp-308.

This sequence belongs to the anion channel-forming bestrophin (TC 1.A.46) family. Calcium-sensitive chloride channel subfamily. As to quaternary structure, forms oligomers.

The protein resides in the cell membrane. The enzyme catalyses chloride(in) = chloride(out). In terms of biological role, ligand-gated anion channel that allows the movement of chloride monoatomic anions across cell membranes when activated by Calcium (Ca2+). The sequence is that of Bestrophin homolog 1 (best-1) from Caenorhabditis elegans.